A 117-amino-acid chain; its full sequence is Immunoglobulin lambda variable 1-44 (117 aa).

Positions Met-1–Ala-19 are cleaved as a signal peptide. Gln-20 carries the pyrrolidone carboxylic acid modification. The interval Gln-20–Ser-44 is framework-1. The 98-residue stretch at Gln-20–Gly-117 folds into the Ig-like domain. Residues Thr-24–Gln-35 show a composition bias toward polar residues. Residues Thr-24 to Ser-45 are disordered. Cysteines 41 and 108 form a disulfide. Residues Ser-45–Thr-52 are complementarity-determining-1. A framework-2 region spans residues Val-53–Tyr-69. Positions Ser-70–Asn-72 are complementarity-determining-2. Residues Gln-73–Cys-108 form a framework-3 region. A complementarity-determining-3 region spans residues Ala-109–Gly-117.

As to quaternary structure, immunoglobulins are composed of two identical heavy chains and two identical light chains; disulfide-linked.

The protein resides in the secreted. Its subcellular location is the cell membrane. V region of the variable domain of immunoglobulin light chains that participates in the antigen recognition. Immunoglobulins, also known as antibodies, are membrane-bound or secreted glycoproteins produced by B lymphocytes. In the recognition phase of humoral immunity, the membrane-bound immunoglobulins serve as receptors which, upon binding of a specific antigen, trigger the clonal expansion and differentiation of B lymphocytes into immunoglobulins-secreting plasma cells. Secreted immunoglobulins mediate the effector phase of humoral immunity, which results in the elimination of bound antigens. The antigen binding site is formed by the variable domain of one heavy chain, together with that of its associated light chain. Thus, each immunoglobulin has two antigen binding sites with remarkable affinity for a particular antigen. The variable domains are assembled by a process called V-(D)-J rearrangement and can then be subjected to somatic hypermutations which, after exposure to antigen and selection, allow affinity maturation for a particular antigen. This is Immunoglobulin lambda variable 1-44 from Homo sapiens (Human).